The chain runs to 368 residues: 2-deoxy-scyllo-inosose synthase (368 aa).

NAD(+) is bound by residues Asp-42, Glu-72 to Lys-75, Gly-104 to Asn-108, Thr-128 to Thr-129, Ser-139 to Lys-141, Lys-150 to Asn-151, and Gln-176. Residue Lys-141 is part of the active site. Co(2+) is bound at residue Glu-183. Residue Glu-243 is part of the active site. Positions 246 and 262 each coordinate Co(2+).

It belongs to the sugar phosphate cyclases superfamily. DOI synthase family. As to quaternary structure, was isolated as a heterodimeric enzyme comprising of BtrC and a smaller polypeptide further identified as PdxT by sequence homology. Homodimer in solution. NAD(+) serves as cofactor. Requires Co(2+) as cofactor.

The enzyme catalyses D-glucose 6-phosphate = 2-deoxy-L-scyllo-inosose + phosphate. It participates in metabolic intermediate biosynthesis; 2-deoxystreptamine biosynthesis; 2-deoxystreptamine from D-glucose 6-phosphate: step 1/4. The protein operates within antibiotic biosynthesis; butirosin biosynthesis. Strongly inhibited by EDTA, zinc and Cu(2+). In terms of biological role, catalyzes the intramolecular carbocycle formation from D-glucose-6-phosphate to 2-deoxy-scyllo-inosose (DOI). The polypeptide is 2-deoxy-scyllo-inosose synthase (btrC) (Niallia circulans (Bacillus circulans)).